A 249-amino-acid polypeptide reads, in one-letter code: Proteasome activator complex subunit 1 (249 aa).

The segment at 60–102 is disordered; it reads PLDIPVPDPVKEKEKEERKKQQEKEDKDEKKKGEDEDKGPPCG. Positions 68–98 are enriched in basic and acidic residues; the sequence is PVKEKEKEERKKQQEKEDKDEKKKGEDEDKG.

It belongs to the PA28 family. In terms of assembly, heterodimer of PSME1 and PSME2, which forms a hexameric ring. PSME1 can form homoheptamers.

Its function is as follows. Implicated in immunoproteasome assembly and required for efficient antigen processing. The PA28 activator complex enhances the generation of class I binding peptides by altering the cleavage pattern of the proteasome. The chain is Proteasome activator complex subunit 1 (PSME1) from Homo sapiens (Human).